Here is a 239-residue protein sequence, read N- to C-terminus: uncharacterized protein (239 aa).

4 consecutive transmembrane segments (helical) span residues 9-29 (LAIY…SQII), 65-85 (IIYL…YLFI), 94-114 (IILI…TFVV), and 167-187 (IYFA…MHWI).

Its subcellular location is the cell membrane. This is an uncharacterized protein from Methanocaldococcus jannaschii (strain ATCC 43067 / DSM 2661 / JAL-1 / JCM 10045 / NBRC 100440) (Methanococcus jannaschii).